The sequence spans 637 residues: Tumor protein p73 (637 aa).

The transactivation stretch occupies residues 1–46 (MAQSTTTSPDGGTTFEHLWSSLEPDSTYFDLPQSSRGNNEVVGGTD). T27 carries the post-translational modification Phosphothreonine. Y28 carries the post-translational modification Phosphotyrosine; by SRC and HCK. The segment at 78–104 (RAASASPYTPEHAASVPTHSPYAQPSS) is disordered. Positions 94–104 (PTHSPYAQPSS) are enriched in polar residues. Y99 carries the post-translational modification Phosphotyrosine. The DNA-binding stretch occupies residues 131–310 (FQQSSTAKSA…DRKADEDHYR (180 aa)). Positions 194, 197, 258, and 262 each coordinate Zn(2+). Residues 301-311 (DRKADEDHYRE) are compositionally biased toward basic and acidic residues. Residues 301 to 351 (DRKADEDHYREQQALNESSAKNGAASKRAFKQSPPAVPALGPGVKKRRHGD) are disordered. The interaction with HIPK2 stretch occupies residues 345–380 (KKRRHGDEDTYYLQVRGRENFEILMKLKESLELMEL). The oligomerization stretch occupies residues 345–386 (KKRRHGDEDTYYLQVRGRENFEILMKLKESLELMELVPQPLV). The PPxY motif signature appears at 483 to 487 (PPPPY). Residues 485–551 (PPYHADPSLV…WRGLQDLKQG (67 aa)) enclose the SAM domain. K628 is covalently cross-linked (Glycyl lysine isopeptide (Lys-Gly) (interchain with G-Cter in SUMO); in isoform Alpha). K628 is covalently cross-linked (Glycyl lysine isopeptide (Lys-Gly) (interchain with G-Cter in SUMO2)).

Belongs to the p53 family. As to quaternary structure, found in a complex with p53/TP53 and CABLES1. The C-terminal oligomerization domain binds to the ABL1 tyrosine kinase SH3 domain. Interacts with HECW2. Isoforms Alpha and Beta interact with HIPK2. Isoform Alpha interacts with RANBP9. Interacts with WWOX. Isoform Beta interacts homotypically and with p53, whereas isoform Alpha does not. Interacts (via SAM domain) with FBXO45 (via B30.2/SPRY domain). Interacts with YAP1 (phosphorylated form). Interacts with HCK (via SH3 domain); this inhibits TP73 activity and degradation. Zn(2+) is required as a cofactor. In terms of processing, isoform Alpha (but not isoform Beta) is sumoylated on Lys-628, which potentiates proteasomal degradation but does not affect transcriptional activity. Post-translationally, polyubiquitinated by RCHY1/PIRH2; leading to its degradation by the proteasome.

It localises to the nucleus. It is found in the cytoplasm. Functionally, participates in the apoptotic response to DNA damage. May be a tumor suppressor protein. Is an activator of FOXJ1 expression, essential for the positive regulation of lung ciliated cell differentiation. The protein is Tumor protein p73 (TP73) of Chlorocebus aethiops (Green monkey).